The chain runs to 87 residues: Costars family protein (87 aa).

This sequence belongs to the costars family.

This is Costars family protein from Oryza sativa subsp. indica (Rice).